Reading from the N-terminus, the 305-residue chain is Spermatogenesis-associated protein 4 (305 aa).

A Calponin-homology (CH) domain is found at 49–155; the sequence is SRLSRSVLRW…EEVYTLLTHR (107 aa).

It localises to the nucleus. Functionally, may play a role in apoptosis regulation. This chain is Spermatogenesis-associated protein 4 (SPATA4), found in Pan troglodytes (Chimpanzee).